The following is a 118-amino-acid chain: Large ribosomal subunit protein uL24 (118 aa).

The protein belongs to the universal ribosomal protein uL24 family. As to quaternary structure, part of the 50S ribosomal subunit.

Its function is as follows. One of two assembly initiator proteins, it binds directly to the 5'-end of the 23S rRNA, where it nucleates assembly of the 50S subunit. Functionally, one of the proteins that surrounds the polypeptide exit tunnel on the outside of the subunit. The sequence is that of Large ribosomal subunit protein uL24 from Parasynechococcus marenigrum (strain WH8102).